The primary structure comprises 123 residues: uncharacterized protein (123 aa).

Residues 1–20 (MARTLALRASAGLVAGMAMA) form the signal peptide.

This is an uncharacterized protein from Mycobacterium bovis (strain ATCC BAA-935 / AF2122/97).